The chain runs to 95 residues: Protein RALF-like 16 (95 aa).

Residues 1-29 form the signal peptide; that stretch reads MVAYEKSPIVFLFATMMLVMFLFCGSGEA. 2 disulfides stabilise this stretch: Cys-45/Cys-53 and Cys-65/Cys-71.

Belongs to the plant rapid alkalinization factor (RALF) family.

It localises to the secreted. Functionally, cell signaling peptide that may regulate plant stress, growth, and development. Mediates a rapid alkalinization of extracellular space by mediating a transient increase in the cytoplasmic Ca(2+) concentration leading to a calcium-dependent signaling events through a cell surface receptor and a concomitant activation of some intracellular mitogen-activated protein kinases. The polypeptide is Protein RALF-like 16 (RALFL16) (Arabidopsis thaliana (Mouse-ear cress)).